The following is a 406-amino-acid chain: Tubby-like F-box protein 3 (406 aa).

The region spanning 50 to 105 (SCWASMPPELLRDVLMRIEQSEDTWPSRKNVVSCAGVCRNWREIVKEIVRVPELSS) is the F-box domain.

Belongs to the TUB family. In terms of tissue distribution, ubiquitous at low levels. Not detected in mature siliques.

Its subcellular location is the cell membrane. The protein resides in the plastid. The protein localises to the nucleus. It localises to the nucleoplasm. It is found in the cytoplasm. In terms of biological role, involved in abiotic stress signaling. Tethered to plasma membrane (PM) and probably bound to phosphatidylinositol 4,5-bisphosphate. Abiotic stresses (drought, salt, H(2)O(2)) trigger phospholipase C mediated PM dislogement and plastidial and nucleocytosolic relocation of TULP3. The polypeptide is Tubby-like F-box protein 3 (Arabidopsis thaliana (Mouse-ear cress)).